The following is a 420-amino-acid chain: Forkhead box protein I3 (420 aa).

Disordered stretches follow at residues 103-122 (GCSQRPFAQPAPAAPASPAA), 234-306 (FRRK…GPML), and 364-396 (DTLQLSNSTSNSTGQRSSYYSPFPASTSGGQSS). Residues 108 to 122 (PFAQPAPAAPASPAA) are compositionally biased toward low complexity. The residue at position 119 (serine 119) is a Phosphoserine. The fork-head DNA-binding region spans 145-239 (RPPYSYSALI…DNGNFRRKRK (95 aa)). Residues 235 to 241 (RRKRKRR) carry the Nuclear localization signal motif. Phosphoserine occurs at positions 277, 285, and 287. The segment covering 294–306 (TKSTASSPGGPML) has biased composition (polar residues). Residues 406-414 (SMVNSLIYP) carry the 9aaTAD motif.

Post-translationally, phosphorylation promotes the transcription factor activity. Dephosphorylation by protein phosphatase 2A (PP2A) reduces its activity.

It localises to the nucleus. In terms of biological role, transcription factor required for pharyngeal arch development, which is involved in hair, ear, jaw and dental development. May act as a pioneer transcription factor during pharyngeal arch development. Required for epithelial cell differentiation within the epidermis. Acts at multiple stages of otic placode induction: necessary for preplacodal ectoderm to execute an inner ear program. Required for hair follicle stem cell specification. Acts downstream of TBX1 for the formation of the thymus and parathyroid glands from the third pharyngeal pouch. The protein is Forkhead box protein I3 of Homo sapiens (Human).